The following is a 997-amino-acid chain: Glutamate [NMDA] receptor subunit 1 (997 aa).

Positions 1–26 are cleaved as a signal peptide; sequence MAVAEFVFCWPLFELAIVLLVAPIHA. Residues 27-573 are Extracellular-facing; it reads AQRHTASDNP…TLVSFLQPFS (547 aa). N-linked (GlcNAc...) asparagine glycans are attached at residues Asn258, Asn314, Asn345, Asn397, Asn454, Asn481, and Asn501. Residues 530-532 and Arg537 each bind glycine; that span reads PLT. A helical membrane pass occupies residues 574-594; sequence NTLWILVMVSVHVVALVLYLL. The Cytoplasmic segment spans residues 595–651; the sequence is DRFSPFGRFKLSHSDSNEEKALNLSSAVWFAWGVLLNSGIGEGTPRSFSARVLGMVW. Residues 652-672 form a helical membrane-spanning segment; the sequence is AGFAMIIVASYTANLAAFLVL. The Extracellular segment spans residues 673–831; that stretch reads ERPKTKLSGI…KTPNTLGLKN (159 aa). A glycan (N-linked (GlcNAc...) asparagine) is linked at Asn693. Positions 703 and 747 each coordinate glycine. A helical membrane pass occupies residues 832–852; the sequence is MAGVFILVGVGIAGGVGLIII. The Cytoplasmic portion of the chain corresponds to 853–997; that stretch reads EVIYKKHQVK…YTSDVSHLVV (145 aa). Residues 947–997 are disordered; sequence ELGKPGQSPKVMSANQPGMPMPMLGKTRPQQSVLPPRYSPGYTSDVSHLVV. Residues 987–997 show a composition bias toward polar residues; it reads GYTSDVSHLVV.

This sequence belongs to the glutamate-gated ion channel (TC 1.A.10.1) family. Forms a heteromeric NMDA channel with Nmdar2.

It is found in the cell membrane. The protein resides in the postsynaptic cell membrane. The protein localises to the postsynaptic density. NMDA receptor subtype of glutamate-gated ion channels with high calcium permeability and voltage-dependent sensitivity to magnesium. Mediated by glycine. This protein plays a key role in synaptic plasticity, synaptogenesis, excitotoxicity, memory acquisition and learning. It mediates neuronal functions in glutamate neurotransmission. Is involved in the cell surface targeting of NMDA receptors. Plays a role in associative learning and in long-term memory consolidation. The chain is Glutamate [NMDA] receptor subunit 1 from Drosophila erecta (Fruit fly).